The following is a 72-amino-acid chain: Translation initiation factor IF-1 (72 aa).

In terms of domain architecture, S1-like spans 1-72 (MAKQSAIEKD…SKGRIAFRYK (72 aa)).

This sequence belongs to the IF-1 family. As to quaternary structure, component of the 30S ribosomal translation pre-initiation complex which assembles on the 30S ribosome in the order IF-2 and IF-3, IF-1 and N-formylmethionyl-tRNA(fMet); mRNA recruitment can occur at any time during PIC assembly.

Its subcellular location is the cytoplasm. One of the essential components for the initiation of protein synthesis. Stabilizes the binding of IF-2 and IF-3 on the 30S subunit to which N-formylmethionyl-tRNA(fMet) subsequently binds. Helps modulate mRNA selection, yielding the 30S pre-initiation complex (PIC). Upon addition of the 50S ribosomal subunit IF-1, IF-2 and IF-3 are released leaving the mature 70S translation initiation complex. This Parabacteroides distasonis (strain ATCC 8503 / DSM 20701 / CIP 104284 / JCM 5825 / NCTC 11152) protein is Translation initiation factor IF-1.